Reading from the N-terminus, the 299-residue chain is Plant-type L-asparaginase (299 aa).

Threonine 169 serves as the catalytic Nucleophile. Residues 197–200 (RVGD) and 220–223 (TGVG) each bind substrate.

The protein belongs to the Ntn-hydrolase family. Heterotetramer of two alpha and two beta chains arranged as a dimer of alpha/beta heterodimers. The uncleaved protein forms homodimers. In terms of processing, autocleaved. Generates the alpha and beta subunits. The N-terminal residue of the beta subunit is thought to be responsible for the nucleophile hydrolase activity.

It carries out the reaction L-asparagine + H2O = L-aspartate + NH4(+). Its activity is regulated as follows. Divalent metal ions and EDTA do not have significant effect on enzyme activity, indicating that activity is metal-independent. In terms of biological role, catalyzes the hydrolysis of L-asparagine into L-aspartate and ammonia. Also displays D-asparaginase activity, which is about 20% of the L-asparaginase activity. Does not exhibit glutaminase activity. The chain is Plant-type L-asparaginase from Pyrobaculum calidifontis (strain DSM 21063 / JCM 11548 / VA1).